The chain runs to 71 residues: BBSome-interacting protein 1 (71 aa).

This sequence belongs to the BBIP10 family.

It localises to the cell projection. It is found in the cilium. Its subcellular location is the cytoplasm. In terms of biological role, required for primary cilia assembly. The protein is BBSome-interacting protein 1 (bbip1) of Nematostella vectensis (Starlet sea anemone).